A 799-amino-acid polypeptide reads, in one-letter code: RasGAP-activating-like protein 1 (799 aa).

C2 domains lie at 1 to 105 and 116 to 231; these read MAKS…DSWI and VQGE…NGWF. Positions 21, 27, 74, 76, 82, 149, 155, 202, 204, and 210 each coordinate Ca(2+). A Ras-GAP domain is found at 316–544; sequence GLAGPFLDYL…SRVRDFLDQL (229 aa). Thr-400 is subject to Phosphothreonine. The PH domain occupies 565-672; it reads TIVREGFLLK…WLSALRKASA (108 aa). A Btk-type zinc finger spans residues 674–710; the sequence is NPGKLVACHPGAFRSGRWTCCLQAERSAAGCSRTHSA. Zn(2+) is bound by residues His-682, Cys-693, Cys-694, and Cys-704.

Ca(2+) is required as a cofactor.

Probable inhibitory regulator of the Ras-cyclic AMP pathway. Plays a role in dendrite formation by melanocytes. This is RasGAP-activating-like protein 1 from Mus musculus (Mouse).